The following is a 232-amino-acid chain: Ovalbumin-related protein X (232 aa).

Belongs to the serpin family. Ov-serpin subfamily. As to expression, expressed in egg white (at protein level).

The sequence is that of Ovalbumin-related protein X (SERPINB14C) from Gallus gallus (Chicken).